An 874-amino-acid chain; its full sequence is MKSAEIREAFLRFFEEQGHTRVASSSLIPGNDPTLLFTNAGMNQFKDCFLGQEKRAYTRAVSSQKCVRAGGKHNDLENVGYTARHHTFFEMLGNFSFGDYFKRDAITFAWNFLTSDKWLNLPKEKLWVTVYASDDEAYDIWTQEVGVPAERMVRIGDNKGAPYASDNFWTMGDTGPCGPCTEIFYDHGPDIWGGPPGSPEEDGDRYIEIWNNVFMQFNRTADGVLHPLPAPSVDTGMGLERISAVMQHVHSNYEIDLFQSLLAAAAEAIGCSNDEQPSLKVVADHIRSCGFLIADGVLPSNEGRGYVLRRIIRRACRHGNKLGAKGSFFHKIVAALVTEMGEAFPELKGQQAHIERVLKTEEEQFAKTLEQGLRILEQDLAQLQGKVVPGDVVFKLYDTYGFPMDLTGDIARERELTIDEAGFEREMEAQRERARSASAFGMDYNSLVKVDTATDFLGYDTTEGQGKVIALYKDGQSVEQLTEGEEGVVVLDRTPFYAESGGQVGDSGYLQAGAARFDVRDTTKTGGAFLHHGVIASGALTVGATVDARVDADVQHATSLNHSATHLLHEALRQVLGEHVQQKGSLVDSQRLRFDFSHFEAVKPEQIKALEDIVNREVRRNTEVQTELTDIETAKAKGAMALFGEKYGDTVRVLSMGGDFSVELCGGIHAKRTGDISLFKIISEGGVASGVRRIEAITGAAALAYLNAAEEQVKEAAQLVKGNRDNLIDKLSAVLERNRQLEKQLEQLQAKAASAAGDDLSNAAVEVKGAKVLAARLDGQDGKALLALVDQLKNKLGHAVILLGSEHEGKVVLVAGVTKDLSGQLKAGDLMKQAAAVVGGKGGGRPDMAQGGGVDVASLDQALALAVPFAEQGL.

4 residues coordinate Zn(2+): histidine 562, histidine 566, cysteine 665, and histidine 669.

The protein belongs to the class-II aminoacyl-tRNA synthetase family. The cofactor is Zn(2+).

Its subcellular location is the cytoplasm. The enzyme catalyses tRNA(Ala) + L-alanine + ATP = L-alanyl-tRNA(Ala) + AMP + diphosphate. Its function is as follows. Catalyzes the attachment of alanine to tRNA(Ala) in a two-step reaction: alanine is first activated by ATP to form Ala-AMP and then transferred to the acceptor end of tRNA(Ala). Also edits incorrectly charged Ser-tRNA(Ala) and Gly-tRNA(Ala) via its editing domain. The protein is Alanine--tRNA ligase of Pseudomonas entomophila (strain L48).